A 953-amino-acid polypeptide reads, in one-letter code: ATP-dependent 6-phosphofructokinase (953 aa).

Residues 1 to 558 are N-terminal catalytic PFK domain 1; the sequence is MIEGISFASF…QLQGFLLTNS (558 aa). ATP-binding positions include Gly193, 256–257, and 286–289; these read RC and GDGS. Mg(2+) is bound at residue Asp287. Residues 332 to 334, Arg369, 376 to 378, Glu433, Arg460, and 466 to 469 contribute to the substrate site; these read SID, MGR, and HVQR. Residue Asp334 is the Proton acceptor of the active site. Residues 559-572 are interdomain linker; it reads ADKDRPQEPAKDPL. Residues 573-953 are C-terminal regulatory PFK domain 2; sequence RVAIVCTGAP…AKEQGIIDPC (381 aa). Beta-D-fructose 2,6-bisphosphate-binding positions include Arg645, 702–706, Arg740, 747–749, Glu807, Arg833, 839–842, and Arg906; these read TISNN, QGG, and HVQQ.

The protein belongs to the phosphofructokinase type A (PFKA) family. ATP-dependent PFK group I subfamily. Eukaryotic two domain clade 'E' sub-subfamily. Heterooctamer of 4 alpha and 4 beta chains. Requires Mg(2+) as cofactor.

Its subcellular location is the cytoplasm. The catalysed reaction is beta-D-fructose 6-phosphate + ATP = beta-D-fructose 1,6-bisphosphate + ADP + H(+). It participates in carbohydrate degradation; glycolysis; D-glyceraldehyde 3-phosphate and glycerone phosphate from D-glucose: step 3/4. With respect to regulation, allosterically activated by ADP, AMP, or fructose 2,6-bisphosphate, and allosterically inhibited by ATP or citrate. Functionally, catalyzes the phosphorylation of D-fructose 6-phosphate to fructose 1,6-bisphosphate by ATP, the first committing step of glycolysis. The chain is ATP-dependent 6-phosphofructokinase (PFK1) from Yarrowia lipolytica (strain CLIB 122 / E 150) (Yeast).